An 876-amino-acid chain; its full sequence is Probable galactinol--sucrose galactosyltransferase 4 (876 aa).

S7 and S9 each carry phosphoserine.

The protein belongs to the glycosyl hydrolases 36 family.

It carries out the reaction alpha-D-galactosyl-(1-&gt;3)-1D-myo-inositol + sucrose = raffinose + myo-inositol. Its function is as follows. Transglycosidase operating by a ping-pong reaction mechanism. Involved in the synthesis of raffinose, a major soluble carbohydrate in seeds, roots and tubers. The protein is Probable galactinol--sucrose galactosyltransferase 4 (RFS4) of Arabidopsis thaliana (Mouse-ear cress).